We begin with the raw amino-acid sequence, 804 residues long: Exocyst complex component 6 (804 aa).

It belongs to the SEC15 family. As to quaternary structure, the exocyst complex is composed of EXOC1, EXOC2, EXOC3, EXOC4, EXOC5, EXOC6, EXOC7 and EXOC8. Interacts with CNTRL. Interacts with RAB11A in a GTP-dependent manner.

The protein resides in the cytoplasm. The protein localises to the perinuclear region. It is found in the cell projection. It localises to the growth cone. Its subcellular location is the midbody. The protein resides in the midbody ring. Its function is as follows. Component of the exocyst complex involved in the docking of exocytic vesicles with fusion sites on the plasma membrane. Together with RAB11A, RAB3IP, RAB8A, PARD3, PRKCI, ANXA2, CDC42 and DNMBP promotes transcytosis of PODXL to the apical membrane initiation sites (AMIS), apical surface formation and lumenogenesis. The protein is Exocyst complex component 6 (Exoc6) of Rattus norvegicus (Rat).